The primary structure comprises 389 residues: MGWWRKKKKPKSEIASERGAKLLKDLIECCDGKSNPIKFFSADEIRKATNNFGVSNLVSELSHDFDYKWYSGKNENHDMILVRKAFSQSVYYKDTFFRDIAVSSMVSGHKNFLKLIGYCLEFEEPVMVYHGVKKHYHLESSEQPWKRRMKIAEDIATALAYLHTAFPRPFVYRCLSLTNILLDEDGVAKLMDFSFCVSIPEGETFVQVDYIAGTVDYLKPNYLKHGVVSEETDVFAVGHSMQMLLMGEKIFDRIMRRPFPTSKFMEEPKMDEIADPEMGEISEEELCQMKAFLLLSLRCTGHVGEVPTMVEVAKELKSIQRCLHNDTFSPSVETQFDSHQDISSSVILSNQTKDTRALLRCIACHVFDEMFQWVMMNWFRFFRRNRRIC.

One can recognise a Protein kinase domain in the interval 41 to 342 (SADEIRKATN…ETQFDSHQDI (302 aa)). Residues 47–55 (KATNNFGVS) and K84 each bind ATP. Position 129 is a phosphotyrosine (Y129). T214 bears the Phosphothreonine mark. A Phosphotyrosine modification is found at Y222.

The protein belongs to the protein kinase superfamily. Ser/Thr protein kinase family.

In terms of biological role, together with RPP13L4/ZAR1, involved in the regulation of the ambient temperature-sensitive intersection of growth and immune response in the absence of pathogens. The chain is Inactive serine/threonine-protein kinase ZRK12 from Arabidopsis thaliana (Mouse-ear cress).